Consider the following 448-residue polypeptide: N-succinylarginine dihydrolase (448 aa).

Residues 19–28 (AGLSYGNVAS), asparagine 110, and 137–138 (HR) each bind substrate. Glutamate 174 is an active-site residue. Arginine 214 serves as a coordination point for substrate. Residue histidine 250 is part of the active site. Positions 252 and 364 each coordinate substrate. Cysteine 370 functions as the Nucleophile in the catalytic mechanism.

It belongs to the succinylarginine dihydrolase family. Homodimer.

It carries out the reaction N(2)-succinyl-L-arginine + 2 H2O + 2 H(+) = N(2)-succinyl-L-ornithine + 2 NH4(+) + CO2. It functions in the pathway amino-acid degradation; L-arginine degradation via AST pathway; L-glutamate and succinate from L-arginine: step 2/5. Its function is as follows. Catalyzes the hydrolysis of N(2)-succinylarginine into N(2)-succinylornithine, ammonia and CO(2). The polypeptide is N-succinylarginine dihydrolase (Pseudoalteromonas translucida (strain TAC 125)).